Consider the following 257-residue polypeptide: Granzyme M (257 aa).

A signal peptide spans Met-1 to Gly-23. Positions Thr-24–Gln-25 are cleaved as a propeptide — activation peptide. The region spanning Ile-26–Gly-254 is the Peptidase S1 domain. A disulfide bridge connects residues Cys-51 and Cys-67. Residues His-66 and Asp-111 each act as charge relay system in the active site. Cystine bridges form between Cys-145/Cys-213, Cys-176/Cys-192, and Cys-203/Cys-230. N-linked (GlcNAc...) asparagine glycosylation occurs at Asn-177. Ser-207 (charge relay system) is an active-site residue.

This sequence belongs to the peptidase S1 family. Granzyme subfamily. Highly and constitutively expressed in activated natural killer (NK) cells.

Its subcellular location is the secreted. The protein localises to the cytoplasmic granule. Functionally, cleaves peptide substrates after methionine, leucine, and norleucine. Physiological substrates include EZR, alpha-tubulins and the apoptosis inhibitor BIRC5/Survivin. Promotes caspase activation and subsequent apoptosis of target cells. The polypeptide is Granzyme M (GZMM) (Homo sapiens (Human)).